Consider the following 243-residue polypeptide: Pyridoxine 5'-phosphate synthase (243 aa).

N9 provides a ligand contact to 3-amino-2-oxopropyl phosphate. A 1-deoxy-D-xylulose 5-phosphate-binding site is contributed by 11-12 (DH). Residue R20 coordinates 3-amino-2-oxopropyl phosphate. Residue H45 is the Proton acceptor of the active site. Residues R47 and H52 each coordinate 1-deoxy-D-xylulose 5-phosphate. The active-site Proton acceptor is E72. T102 contacts 1-deoxy-D-xylulose 5-phosphate. H193 functions as the Proton donor in the catalytic mechanism. Residues G194 and 215-216 (GH) contribute to the 3-amino-2-oxopropyl phosphate site.

It belongs to the PNP synthase family. As to quaternary structure, homooctamer; tetramer of dimers.

The protein localises to the cytoplasm. The catalysed reaction is 3-amino-2-oxopropyl phosphate + 1-deoxy-D-xylulose 5-phosphate = pyridoxine 5'-phosphate + phosphate + 2 H2O + H(+). Its pathway is cofactor biosynthesis; pyridoxine 5'-phosphate biosynthesis; pyridoxine 5'-phosphate from D-erythrose 4-phosphate: step 5/5. Functionally, catalyzes the complicated ring closure reaction between the two acyclic compounds 1-deoxy-D-xylulose-5-phosphate (DXP) and 3-amino-2-oxopropyl phosphate (1-amino-acetone-3-phosphate or AAP) to form pyridoxine 5'-phosphate (PNP) and inorganic phosphate. The chain is Pyridoxine 5'-phosphate synthase from Pseudoalteromonas translucida (strain TAC 125).